Consider the following 672-residue polypeptide: DNA ligase (672 aa).

NAD(+) contacts are provided by residues 32–36, 81–82, and E113; these read DAEYD and SL. K115 acts as the N6-AMP-lysine intermediate in catalysis. Residues R136, E173, K290, and K314 each contribute to the NAD(+) site. Zn(2+) is bound by residues C408, C411, C426, and C432. The 79-residue stretch at 594–672 folds into the BRCT domain; that stretch reads EIDSPFAGKT…EAEMLRLLGE (79 aa).

Belongs to the NAD-dependent DNA ligase family. LigA subfamily. Requires Mg(2+) as cofactor. It depends on Mn(2+) as a cofactor.

The catalysed reaction is NAD(+) + (deoxyribonucleotide)n-3'-hydroxyl + 5'-phospho-(deoxyribonucleotide)m = (deoxyribonucleotide)n+m + AMP + beta-nicotinamide D-nucleotide.. Its function is as follows. DNA ligase that catalyzes the formation of phosphodiester linkages between 5'-phosphoryl and 3'-hydroxyl groups in double-stranded DNA using NAD as a coenzyme and as the energy source for the reaction. It is essential for DNA replication and repair of damaged DNA. The sequence is that of DNA ligase from Cronobacter sakazakii (strain ATCC BAA-894) (Enterobacter sakazakii).